The chain runs to 308 residues: MHEGHQESFKELEMTKPYMFFNELVGEEDYNKELENSNTKFQGQGQLKLLLGELYFLNTLIKNKTLCSDTVIVYIGSAPGSHINFLYHYMDDLKIDLKWILIDGRDHDRSLESLKNVSIIHRFVDEQYLFKLRNMIRKNHKIVLISDIRSLRGKEPTSEDLLHDYALQNQMVSILKPIASSLKWRCPFPDQWIRDFYIPCGDEFLQPFAPPFSAEMRLLSCYSRAPIRLIRIDKNAAIEYEKKMFYLNTKIRPKIVLDFDYPNQKYDYFYMFYILKDIVLPTYKEFSTYKQKVIFLQEAIFNALNIKP.

Y30 is an mRNA binding site. Positions 46, 74, 76, 80, 103, 105, 124, and 147 each coordinate S-adenosyl-L-methionine. A binding to NPH-I region spans residues 177 to 257 (PIASSLKWRC…NTKIRPKIVL (81 aa)). K183 serves as the catalytic For methyltransferase activity. MRNA-binding positions include 185-188 (RCPF), D190, 213-215 (SAE), and E241.

This sequence belongs to the class I-like SAM-binding methyltransferase superfamily. Poxvirus/kinetoplastid 2'-O-MTase family. Interacts with poly(A) polymerase catalytic subunit OPG063. Interacts with OPG109 and OPG123; these interactions might help linking transcription to capping and polyadenylation.

It localises to the virion. The catalysed reaction is a 5'-end (N(7)-methyl 5'-triphosphoguanosine)-ribonucleoside in mRNA + S-adenosyl-L-methionine = a 5'-end (N(7)-methyl 5'-triphosphoguanosine)-(2'-O-methyl-ribonucleoside) in mRNA + S-adenosyl-L-homocysteine + H(+). In terms of biological role, displays methyltransferase, positive regulation of the poly(A) polymerase and transcription elongation activities. Involved in the modification of both mRNA ends and in intermediate and late gene positive transcription elongation. At the mRNAs 5' end, methylates the ribose 2' OH group of the first transcribed nucleotide, thereby producing a 2'-O-methylpurine cap. At the 3' end, functions as a processivity factor which stimulates the activity of the viral poly(A) polymerase OPG063 that creates mRNA's poly(A) tail. In the presence of OPG102, OPG063 does not dissociate from the RNA allowing tail elongation to around 250 adenylates. The chain is Cap-specific mRNA (nucleoside-2'-O-)-methyltransferase (OPG102) from Fowlpox virus (strain NVSL) (FPV).